Reading from the N-terminus, the 757-residue chain is MAKRPRTSEEDDDFQYADHDYEISQQRSLKKICNRVKWTRDEDEKLKKLVEQNGTDDWAFIASHLQNRSDFQCQHRWQKVLNPELIKGPWTKEEDQRVIELVQKYGPKRWSLIAKHLKGRIGKQCRERWHNHLNPEVKKSSWTEAEDRVIYEAHKRLGNRWAEIAKLLPGRTDNSIKNHWNSTMRRKVEQEGYLQDGTKSSSERTGSSTLAQKPCVTMEHLHTQNQFYIPVQTHIPVYQYASPEDSCIEHASASANLVQQSFIDDDPDKEKKIKELELLLMSTENEIRRKRLSSQAGSLPGWSGSFVMEDCVPNTLNSLGEQTSEFYSMDETQGTSVQQNSPTKYLAVEANAVLSSLQTIPEFAETLELIESDPLAWSDVTSFDLSEAVASPVKPAPLKLMRIQHNERAAECQFNVSVMLDGKKHSSISGEEEAVFPTTPNLTKYSTPPAILRKKKRLRAGQSPVNELNDGLCNDAINVALKHTPVKTLPFSPSQFFNTCSGNEQFNLENPAFTSTPICGQKVLITTPLHKETTPTDQKENAGFRTPTIRRSLLGSTPRTPTPFKNALAAQEKKYGPLKLTSQPLAFLEEDIREVLKEETGTDIFLKEEDDSVYKSCKQEHNSSKKVRKSLVLDAWEKEELGAQLFTEDSGLDVQSENAYTTSLLMIPLLEIHDNRCNLPSENQDTNSSNKANAVIKKKLNACSSKNIKLEKSLQPNYEWEAVVYGKTEDQLIMTEQARRYLNAYTATSNTSRALIL.

HTH myb-type domains are found at residues 30-81 (KKIC…QKVL), 82-137 (NPEL…NPEV), and 138-188 (KKSS…RRKV). 3 DNA-binding regions (H-T-H motif) span residues 58–81 (WAFIASHLQNRSDFQCQHRWQKVL), 110–133 (WSLIAKHLKGRIGKQCRERWHNHL), and 161–184 (WAEIAKLLPGRTDNSIKNHWNSTM). The segment at 187-209 (KVEQEGYLQDGTKSSSERTGSST) is disordered. A compositionally biased stretch (polar residues) spans 197 to 209 (GTKSSSERTGSST). The tract at residues 235 to 300 (IPVYQYASPE…RLSSQAGSLP (66 aa)) is transcriptional activation domain. Positions 303–558 (SGSFVMEDCV…IRRSLLGSTP (256 aa)) are negative regulatory domain.

In terms of assembly, component of the DREAM complex. In terms of tissue distribution, expressed ubiquitously.

The protein resides in the nucleus. Its function is as follows. Strong transcriptional activator; DNA-binding protein that specifically recognize the sequence 5'-YAAC[GT]G-3'. Could have a role in the proliferation and/or differentiation of neurogenic, spermatogenic and B-lymphoid cells. In Gallus gallus (Chicken), this protein is Myb-related protein A (MYBL1).